A 222-amino-acid chain; its full sequence is Ras-related protein Rab-21 (222 aa).

A2 is subject to N-acetylalanine. Positions 25, 28, 29, 30, 31, 42, 43, 45, 47, and 48 each coordinate GTP. Mg(2+) is bound at residue T30. The short motif at 40–53 (KFNDKHITTLQASF) is the Switch 1 element. The Mg(2+) site is built by T48 and D71. Positions 73-91 (AGQERFHALGPIYYRDSNG) match the Switch 2 motif. The GTP site is built by G74, N129, K130, D132, A160, and K161. S-geranylgeranyl cysteine attachment occurs at residues C218 and C219. Cysteine methyl ester is present on C219. Residues 220–222 (SSG) constitute a propeptide, removed in mature form.

It belongs to the small GTPase superfamily. Rab family. As to quaternary structure, interacts with the cytoplasmic tail of integrins ITGA1, ITGA2, ITGA5, ITGA6, ITGA11 and ITGB1; this interaction is dependent upon its GDP/GTP cycle. Interacts with RABGEF1 (via VPS9 domain). Interacts with ANKRD27. Interacts (in GTP-bound form) with VAMP8 in response to starvation; the interaction probably regulates VAMP8 endolysosomal trafficking. Interacts (active GTP-bound form) with TMED10; the interaction is indirect and regulates TMED10 abundance and localization at the Golgi. Requires Mg(2+) as cofactor.

Its subcellular location is the endoplasmic reticulum membrane. The protein resides in the golgi apparatus. The protein localises to the trans-Golgi network. It localises to the golgi apparatus membrane. It is found in the early endosome membrane. Its subcellular location is the cytoplasmic vesicle membrane. The protein resides in the cleavage furrow. The protein localises to the cell projection. It localises to the neuron projection. It catalyses the reaction GTP + H2O = GDP + phosphate + H(+). With respect to regulation, regulated by guanine nucleotide exchange factors (GEFs) including ANKRD27 and RABGEF1, which promote the exchange of bound GDP for free GTP. Regulated by GTPase activating proteins (GAPs) which increase the GTP hydrolysis activity. Inhibited by GDP dissociation inhibitors (GDIs). In terms of biological role, the small GTPases Rab are key regulators of intracellular membrane trafficking, from the formation of transport vesicles to their fusion with membranes. Rabs cycle between an inactive GDP-bound form and an active GTP-bound form that is able to recruit to membranes different sets of downstream effectors directly responsible for vesicle formation, movement, tethering and fusion. RAB21 is involved in membrane trafficking control. Regulates integrin internalization and recycling, but does not influence the traffic of endosomally translocated receptors in general. As a result, may regulate cell adhesion and migration. During the mitosis of adherent cells, controls the endosomal trafficking of integrins which is required for the successful completion of cytokinesis. Involved in neurite growth. Following SBF2/MTMT13-mediated activation in response to starvation-induced autophagy, binds to and regulates SNARE protein VAMP8 endolysosomal transport required for SNARE-mediated autophagosome-lysosome fusion. Modulates protein levels of the cargo receptors TMED2 and TMED10, and required for appropriate Golgi localization of TMED10. This Bos taurus (Bovine) protein is Ras-related protein Rab-21 (RAB21).